The chain runs to 1035 residues: Beta-galactosidase (1035 aa).

Residues asparagine 101 and aspartate 199 each coordinate substrate. Aspartate 199 is a Na(+) binding site. Residues glutamate 415, histidine 417, and glutamate 460 each coordinate Mg(2+). Residues glutamate 460 and 540–543 (EYAH) contribute to the substrate site. The Proton donor role is filled by glutamate 460. Glutamate 540 serves as the catalytic Nucleophile. Asparagine 600 is a binding site for Mg(2+). Residues phenylalanine 604 and asparagine 607 each coordinate Na(+). The substrate site is built by asparagine 607 and tryptophan 1011.

This sequence belongs to the glycosyl hydrolase 2 family. As to quaternary structure, homotetramer. The cofactor is Mg(2+). Na(+) is required as a cofactor.

It carries out the reaction Hydrolysis of terminal non-reducing beta-D-galactose residues in beta-D-galactosides.. This is Beta-galactosidase from Psychromonas ingrahamii (strain DSM 17664 / CCUG 51855 / 37).